We begin with the raw amino-acid sequence, 105 residues long: Cell division protein FtsB (105 aa).

At 1-3 (MRL) the chain is on the cytoplasmic side. The helical transmembrane segment at 4-21 (FTLILMVVLALVQRQLWF) threads the bilayer. Residues 22–105 (GKNGLVEYRQ…NKQSSLPKSD (84 aa)) are Periplasmic-facing. The stretch at 28–74 (EYRQVSENLLRRQADNQKLQERNMLLKEDIEDLKSGLEAIEELARND) forms a coiled coil.

This sequence belongs to the FtsB family. As to quaternary structure, part of a complex composed of FtsB, FtsL and FtsQ.

The protein resides in the cell inner membrane. Functionally, essential cell division protein. May link together the upstream cell division proteins, which are predominantly cytoplasmic, with the downstream cell division proteins, which are predominantly periplasmic. The protein is Cell division protein FtsB of Tolumonas auensis (strain DSM 9187 / NBRC 110442 / TA 4).